Reading from the N-terminus, the 101-residue chain is Large ribosomal subunit protein eL36 (101 aa).

Disordered regions lie at residues 1–31 (MGEI…GFLS) and 75–101 (GTHM…SKGE).

The protein belongs to the eukaryotic ribosomal protein eL36 family.

This chain is Large ribosomal subunit protein eL36 (RL36), found in Ulva compressa (Green alga).